We begin with the raw amino-acid sequence, 314 residues long: Methionyl-tRNA formyltransferase (314 aa).

113 to 116 (SLLP) provides a ligand contact to (6S)-5,6,7,8-tetrahydrofolate.

Belongs to the Fmt family.

It catalyses the reaction L-methionyl-tRNA(fMet) + (6R)-10-formyltetrahydrofolate = N-formyl-L-methionyl-tRNA(fMet) + (6S)-5,6,7,8-tetrahydrofolate + H(+). Functionally, attaches a formyl group to the free amino group of methionyl-tRNA(fMet). The formyl group appears to play a dual role in the initiator identity of N-formylmethionyl-tRNA by promoting its recognition by IF2 and preventing the misappropriation of this tRNA by the elongation apparatus. This Ectopseudomonas mendocina (strain ymp) (Pseudomonas mendocina) protein is Methionyl-tRNA formyltransferase.